The chain runs to 60 residues: Large ribosomal subunit protein bL32 (60 aa).

This sequence belongs to the bacterial ribosomal protein bL32 family.

The chain is Large ribosomal subunit protein bL32 from Streptococcus equi subsp. zooepidemicus (strain MGCS10565).